A 122-amino-acid chain; its full sequence is Protein SPIRAL1-like 3 (122 aa).

Disordered stretches follow at residues 1 to 78 (MGKA…NNYF) and 96 to 122 (KVHA…SGNK). Residues 32–61 (TMGTTTTTTTTTTTDGTGGRPITTTTTTVT) show a composition bias toward low complexity. The residue at position 73 (Ser-73) is a Phosphoserine.

The protein belongs to the SPIRAL1 family. In terms of tissue distribution, ubiquitous. Preferentially expressed in above-ground organs.

Functionally, acts redundantly with SPR1 in maintaining the cortical microtubules organization essential for anisotropic cell growth. This chain is Protein SPIRAL1-like 3 (SP1L3), found in Arabidopsis thaliana (Mouse-ear cress).